Here is a 282-residue protein sequence, read N- to C-terminus: Phosphate import ATP-binding protein PstB (282 aa).

The tract at residues 1–33 (MNMAETQLNPIARPTAPAGFDPAQSGQSQAPSR) is disordered. Residues 36–277 (IEINDLNFFY…PVRKETEDYI (242 aa)) form the ABC transporter domain. Position 68–75 (68–75 (GPSGCGKS)) interacts with ATP.

This sequence belongs to the ABC transporter superfamily. Phosphate importer (TC 3.A.1.7) family. The complex is composed of two ATP-binding proteins (PstB), two transmembrane proteins (PstC and PstA) and a solute-binding protein (PstS).

It is found in the cell inner membrane. It carries out the reaction phosphate(out) + ATP + H2O = ADP + 2 phosphate(in) + H(+). Its function is as follows. Part of the ABC transporter complex PstSACB involved in phosphate import. Responsible for energy coupling to the transport system. In Paraburkholderia xenovorans (strain LB400), this protein is Phosphate import ATP-binding protein PstB.